The sequence spans 254 residues: Small ribosomal subunit protein uS2 (254 aa).

This sequence belongs to the universal ribosomal protein uS2 family.

This is Small ribosomal subunit protein uS2 from Borrelia hermsii (strain HS1 / DAH).